Here is a 306-residue protein sequence, read N- to C-terminus: tRNA pseudouridine synthase B (306 aa).

Catalysis depends on Asp47, which acts as the Nucleophile.

It belongs to the pseudouridine synthase TruB family. Type 1 subfamily.

It catalyses the reaction uridine(55) in tRNA = pseudouridine(55) in tRNA. Responsible for synthesis of pseudouridine from uracil-55 in the psi GC loop of transfer RNAs. The chain is tRNA pseudouridine synthase B from Neisseria meningitidis serogroup A / serotype 4A (strain DSM 15465 / Z2491).